Reading from the N-terminus, the 116-residue chain is T cell receptor alpha variable 19 (116 aa).

Positions 1–21 are cleaved as a signal peptide; sequence MLTASLLRAVIASICVVSSMA. Positions 22–116 constitute an Ig-like domain; the sequence is QKVTQAQTEI…SAVYFCALSE (95 aa). A disulfide bridge links Cys43 with Cys112. An N-linked (GlcNAc...) asparagine glycan is attached at Asn96.

Alpha-beta TR is a heterodimer composed of an alpha and beta chain; disulfide-linked. The alpha-beta TR is associated with the transmembrane signaling CD3 coreceptor proteins to form the TR-CD3 (TcR or TCR). The assembly of alpha-beta TR heterodimers with CD3 occurs in the endoplasmic reticulum where a single alpha-beta TR heterodimer associates with one CD3D-CD3E heterodimer, one CD3G-CD3E heterodimer and one CD247 homodimer forming a stable octameric structure. CD3D-CD3E and CD3G-CD3E heterodimers preferentially associate with TR alpha and TR beta chains, respectively. The association of the CD247 homodimer is the last step of TcR assembly in the endoplasmic reticulum and is required for transport to the cell surface.

The protein localises to the cell membrane. Its function is as follows. V region of the variable domain of T cell receptor (TR) alpha chain that participates in the antigen recognition. Alpha-beta T cell receptors are antigen specific receptors which are essential to the immune response and are present on the cell surface of T lymphocytes. Recognize peptide-major histocompatibility (MH) (pMH) complexes that are displayed by antigen presenting cells (APC), a prerequisite for efficient T cell adaptive immunity against pathogens. Binding of alpha-beta TR to pMH complex initiates TR-CD3 clustering on the cell surface and intracellular activation of LCK that phosphorylates the ITAM motifs of CD3G, CD3D, CD3E and CD247 enabling the recruitment of ZAP70. In turn ZAP70 phosphorylates LAT, which recruits numerous signaling molecules to form the LAT signalosome. The LAT signalosome propagates signal branching to three major signaling pathways, the calcium, the mitogen-activated protein kinase (MAPK) kinase and the nuclear factor NF-kappa-B (NF-kB) pathways, leading to the mobilization of transcription factors that are critical for gene expression and essential for T cell growth and differentiation. The T cell repertoire is generated in the thymus, by V-(D)-J rearrangement. This repertoire is then shaped by intrathymic selection events to generate a peripheral T cell pool of self-MH restricted, non-autoaggressive T cells. Post-thymic interaction of alpha-beta TR with the pMH complexes shapes TR structural and functional avidity. The chain is T cell receptor alpha variable 19 from Homo sapiens (Human).